The sequence spans 106 residues: COX assembly mitochondrial protein homolog (106 aa).

Ala-2 is subject to N-acetylalanine. Positions 28 to 71 (RERCSEQVQDFTKCCKDSGVLMVVKCRKENSALKDCLTSYYKDP) constitute a CHCH domain. 2 short sequence motifs (cx9C motif) span residues 31-41 (CSEQVQDFTKC) and 53-63 (CRKENSALKDC). Cystine bridges form between Cys-31–Cys-63 and Cys-41–Cys-53.

It belongs to the CMC family. In terms of assembly, component of the MITRAC (mitochondrial translation regulation assembly intermediate of cytochrome c oxidase complex) complex, the core components of this complex being COA3/MITRAC12 and COX14.

The protein resides in the mitochondrion. Component of the MITRAC (mitochondrial translation regulation assembly intermediate of cytochrome c oxidase complex) complex, that regulates cytochrome c oxidase assembly. The chain is COX assembly mitochondrial protein homolog (CMC1) from Bos taurus (Bovine).